A 547-amino-acid chain; its full sequence is Glucose-6-phosphate isomerase (547 aa).

The active-site Proton donor is Glu-351. Active-site residues include His-382 and Lys-509.

It belongs to the GPI family.

The protein localises to the cytoplasm. The catalysed reaction is alpha-D-glucose 6-phosphate = beta-D-fructose 6-phosphate. The protein operates within carbohydrate biosynthesis; gluconeogenesis. Its pathway is carbohydrate degradation; glycolysis; D-glyceraldehyde 3-phosphate and glycerone phosphate from D-glucose: step 2/4. Its function is as follows. Catalyzes the reversible isomerization of glucose-6-phosphate to fructose-6-phosphate. In Coxiella burnetii (strain RSA 493 / Nine Mile phase I), this protein is Glucose-6-phosphate isomerase.